Here is a 362-residue protein sequence, read N- to C-terminus: Probable dual-specificity RNA methyltransferase RlmN (362 aa).

Glu105 functions as the Proton acceptor in the catalytic mechanism. Positions 111-344 (HEYGNSICVT…VTIRREQGHD (234 aa)) constitute a Radical SAM core domain. The cysteines at positions 118 and 349 are disulfide-linked. [4Fe-4S] cluster-binding residues include Cys125, Cys129, and Cys132. S-adenosyl-L-methionine-binding positions include 175 to 176 (GE), Ser207, 230 to 232 (SLH), and Asn306. Residue Cys349 is the S-methylcysteine intermediate of the active site.

This sequence belongs to the radical SAM superfamily. RlmN family. Requires [4Fe-4S] cluster as cofactor.

Its subcellular location is the cytoplasm. It carries out the reaction adenosine(2503) in 23S rRNA + 2 reduced [2Fe-2S]-[ferredoxin] + 2 S-adenosyl-L-methionine = 2-methyladenosine(2503) in 23S rRNA + 5'-deoxyadenosine + L-methionine + 2 oxidized [2Fe-2S]-[ferredoxin] + S-adenosyl-L-homocysteine. The catalysed reaction is adenosine(37) in tRNA + 2 reduced [2Fe-2S]-[ferredoxin] + 2 S-adenosyl-L-methionine = 2-methyladenosine(37) in tRNA + 5'-deoxyadenosine + L-methionine + 2 oxidized [2Fe-2S]-[ferredoxin] + S-adenosyl-L-homocysteine. Its function is as follows. Specifically methylates position 2 of adenine 2503 in 23S rRNA and position 2 of adenine 37 in tRNAs. This chain is Probable dual-specificity RNA methyltransferase RlmN, found in Bacillus cereus (strain G9842).